A 195-amino-acid polypeptide reads, in one-letter code: Ribonuclease HII (195 aa).

The 190-residue stretch at 6–195 (SLIAGVDEVG…KSFISRLEIN (190 aa)) folds into the RNase H type-2 domain. Asp12, Glu13, and Asp108 together coordinate a divalent metal cation.

Belongs to the RNase HII family. Requires Mn(2+) as cofactor. The cofactor is Mg(2+).

Its subcellular location is the cytoplasm. It catalyses the reaction Endonucleolytic cleavage to 5'-phosphomonoester.. Endonuclease that specifically degrades the RNA of RNA-DNA hybrids. In Prochlorococcus marinus (strain NATL1A), this protein is Ribonuclease HII.